A 418-amino-acid chain; its full sequence is MERRAQPVSAAVAPVTGRRKGAAASRKWMVVPAVGEERRVEFGKHQIMKMTGLPGRDLRVLDPVLSYPSTILGRDRAIVVRLQGVKAIITATEVLVPDHDDVLLASFLLDLRSRLSLPDAAPSTNPAAADRGNGTEQGDQGSVPGLAISGAGNAKIPPFEFKVLEVCLEHACKDLESQTRSLEKEAYPALDKLGSKVSTLNLDHVRNLKSRMVDLSGRVQKIRDELEHLLDDDMDMSEMYLTRKLSFQGLSGSLSRADSHKYASVDHDDDREEEDHDDETESGRESSVYVKPDIEELEMLLEAYFVQIDGTLNTLYHIREYADDTEDYINIMLDEKQNQLLQMGVMLTTATVVVTAGIVVVSLFGMNIHIDLMKDPETPEMVRMSNMHFWETTFGTVAGCIAIYLLAIYAGRKSKILQ.

The interval 119 to 146 (DAAPSTNPAAADRGNGTEQGDQGSVPGL) is disordered. The stretch at 166–232 (VCLEHACKDL…RDELEHLLDD (67 aa)) forms a coiled coil. Positions 258–268 (DSHKYASVDHD) are enriched in basic and acidic residues. Residues 258–287 (DSHKYASVDHDDDREEEDHDDETESGRESS) form a disordered region. The segment covering 269-280 (DDREEEDHDDET) has biased composition (acidic residues). The helical transmembrane segment at 344–364 (GVMLTTATVVVTAGIVVVSLF) threads the bilayer. Residues 365 to 367 (GMN) carry the Required for magnesium transport activity motif. A helical membrane pass occupies residues 389–409 (FWETTFGTVAGCIAIYLLAIY).

It belongs to the CorA metal ion transporter (MIT) (TC 1.A.35.5) family.

The protein localises to the membrane. In terms of biological role, magnesium transporter that may mediate the influx of magnesium. This is Magnesium transporter MRS2-E (MRS2-E) from Oryza sativa subsp. indica (Rice).